The primary structure comprises 131 residues: Inner membrane protein YecN (131 aa).

Topologically, residues 1–107 (MVSALYAVLS…RWRRSGMSAT (107 aa)) are cytoplasmic. Residues 108-128 (WCALLLMVLANLWYMPWELVF) traverse the membrane as a helical segment. Residues 129 to 131 (SLR) are Periplasmic-facing.

The protein resides in the cell inner membrane. In Escherichia coli O6:H1 (strain CFT073 / ATCC 700928 / UPEC), this protein is Inner membrane protein YecN (yecN).